Consider the following 102-residue polypeptide: Small ribosomal subunit protein uS10c (102 aa).

Belongs to the universal ribosomal protein uS10 family. Part of the 30S ribosomal subunit.

It localises to the plastid. It is found in the chloroplast. In terms of biological role, involved in the binding of tRNA to the ribosomes. The chain is Small ribosomal subunit protein uS10c from Guillardia theta (Cryptophyte).